The following is a 183-amino-acid chain: Orotate phosphoribosyltransferase (183 aa).

Residues Arg-21, Lys-88, and 112 to 120 each bind 5-phospho-alpha-D-ribose 1-diphosphate; that span reads EDVVTTGES. The orotate site is built by Thr-116 and Arg-144.

This sequence belongs to the purine/pyrimidine phosphoribosyltransferase family. PyrE subfamily. As to quaternary structure, homodimer. Mg(2+) is required as a cofactor.

It carries out the reaction orotidine 5'-phosphate + diphosphate = orotate + 5-phospho-alpha-D-ribose 1-diphosphate. It participates in pyrimidine metabolism; UMP biosynthesis via de novo pathway; UMP from orotate: step 1/2. Catalyzes the transfer of a ribosyl phosphate group from 5-phosphoribose 1-diphosphate to orotate, leading to the formation of orotidine monophosphate (OMP). This chain is Orotate phosphoribosyltransferase, found in Thermus thermophilus (strain ATCC BAA-163 / DSM 7039 / HB27).